A 71-amino-acid polypeptide reads, in one-letter code: Small ribosomal subunit protein bS18 (71 aa).

This sequence belongs to the bacterial ribosomal protein bS18 family. In terms of assembly, part of the 30S ribosomal subunit. Forms a tight heterodimer with protein bS6.

Its function is as follows. Binds as a heterodimer with protein bS6 to the central domain of the 16S rRNA, where it helps stabilize the platform of the 30S subunit. This chain is Small ribosomal subunit protein bS18, found in Synechocystis sp. (strain ATCC 27184 / PCC 6803 / Kazusa).